A 182-amino-acid polypeptide reads, in one-letter code: ATP-dependent protease subunit HslV (182 aa).

The active site involves T6. Na(+)-binding residues include A164, C167, and T170.

This sequence belongs to the peptidase T1B family. HslV subfamily. In terms of assembly, a double ring-shaped homohexamer of HslV is capped on each side by a ring-shaped HslU homohexamer. The assembly of the HslU/HslV complex is dependent on binding of ATP.

The protein resides in the cytoplasm. It catalyses the reaction ATP-dependent cleavage of peptide bonds with broad specificity.. Allosterically activated by HslU binding. In terms of biological role, protease subunit of a proteasome-like degradation complex believed to be a general protein degrading machinery. The chain is ATP-dependent protease subunit HslV from Borreliella burgdorferi (strain ATCC 35210 / DSM 4680 / CIP 102532 / B31) (Borrelia burgdorferi).